The primary structure comprises 572 residues: Methionine--tRNA ligase (572 aa).

The 'HIGH' region signature appears at 11–21 (PYINGIKHLGN). Residues Cys143, Cys146, Cys156, and Cys159 each contribute to the Zn(2+) site. A 'KMSKS' region motif is present at residues 346-350 (QFSTS). Position 349 (Thr349) interacts with ATP.

Belongs to the class-I aminoacyl-tRNA synthetase family. MetG type 1 subfamily. In terms of assembly, monomer. Zn(2+) is required as a cofactor.

The protein resides in the cytoplasm. It catalyses the reaction tRNA(Met) + L-methionine + ATP = L-methionyl-tRNA(Met) + AMP + diphosphate. In terms of biological role, is required not only for elongation of protein synthesis but also for the initiation of all mRNA translation through initiator tRNA(fMet) aminoacylation. The protein is Methionine--tRNA ligase of Paracoccus denitrificans (strain Pd 1222).